A 523-amino-acid polypeptide reads, in one-letter code: Lysine--tRNA ligase (523 aa).

Positions 30-38 match the 'HIGH' region motif; the sequence is PSGYVHVGN. Residues Asp-95, Cys-99, His-100, His-106, Cys-177, His-180, Cys-199, and His-203 each coordinate Zn(2+). A 'KMSKS' region motif is present at residues 279–283; sequence KMSGS.

This sequence belongs to the class-I aminoacyl-tRNA synthetase family. The cofactor is Zn(2+).

Its subcellular location is the cytoplasm. It carries out the reaction tRNA(Lys) + L-lysine + ATP = L-lysyl-tRNA(Lys) + AMP + diphosphate. The protein is Lysine--tRNA ligase (lysS) of Pyrococcus furiosus (strain ATCC 43587 / DSM 3638 / JCM 8422 / Vc1).